The following is a 214-amino-acid chain: uncharacterized protein (214 aa).

The N-terminal stretch at 1-24 (MVTPHGILLLTITAAASLLWITFA) is a signal peptide. Residues 99–121 (APNDTQEQNSTRNKRDSESYTAT) form a disordered region. Over residues 100–109 (PNDTQEQNST) the composition is skewed to polar residues.

Component of the acid-insoluble and acid-soluble organic matrix of the aragonitic skeleton (at protein level).

The protein resides in the secreted. This is an uncharacterized protein from Acropora millepora (Staghorn coral).